We begin with the raw amino-acid sequence, 308 residues long: Probable GTP 3',8-cyclase (308 aa).

Residues 4-224 enclose the Radical SAM core domain; it reads RFGRPLEDLR…QIRKKHFRPR (221 aa). Arginine 13 is a binding site for GTP. Positions 20, 24, and 27 each coordinate [4Fe-4S] cluster. A GTP-binding site is contributed by lysine 60. S-adenosyl-L-methionine is bound at residue glycine 64. Threonine 90 is a GTP binding site. Residue serine 114 coordinates S-adenosyl-L-methionine. Residue lysine 151 coordinates GTP. [4Fe-4S] cluster is bound by residues cysteine 245 and cysteine 248. Residue 250–252 participates in GTP binding; sequence RIR. Residue cysteine 262 coordinates [4Fe-4S] cluster.

Belongs to the radical SAM superfamily. MoaA family. The cofactor is [4Fe-4S] cluster.

The catalysed reaction is GTP + AH2 + S-adenosyl-L-methionine = (8S)-3',8-cyclo-7,8-dihydroguanosine 5'-triphosphate + 5'-deoxyadenosine + L-methionine + A + H(+). The protein operates within cofactor biosynthesis; molybdopterin biosynthesis. Catalyzes the cyclization of GTP to (8S)-3',8-cyclo-7,8-dihydroguanosine 5'-triphosphate. In Saccharolobus islandicus (strain Y.N.15.51 / Yellowstone #2) (Sulfolobus islandicus), this protein is Probable GTP 3',8-cyclase.